Consider the following 382-residue polypeptide: Farnesyl diphosphate synthase (382 aa).

Residues Lys81, Arg84, and Gln120 each contribute to the isopentenyl diphosphate site. Positions 127 and 131 each coordinate Mg(2+). Arg136 contributes to the dimethylallyl diphosphate binding site. An isopentenyl diphosphate-binding site is contributed by Arg137. Positions 230, 231, 270, 287, and 296 each coordinate dimethylallyl diphosphate.

It belongs to the FPP/GGPP synthase family. Mg(2+) serves as cofactor.

The protein resides in the cytoplasm. It catalyses the reaction isopentenyl diphosphate + dimethylallyl diphosphate = (2E)-geranyl diphosphate + diphosphate. It carries out the reaction isopentenyl diphosphate + (2E)-geranyl diphosphate = (2E,6E)-farnesyl diphosphate + diphosphate. It participates in isoprenoid biosynthesis; farnesyl diphosphate biosynthesis; farnesyl diphosphate from geranyl diphosphate and isopentenyl diphosphate: step 1/1. It functions in the pathway isoprenoid biosynthesis; geranyl diphosphate biosynthesis; geranyl diphosphate from dimethylallyl diphosphate and isopentenyl diphosphate: step 1/1. With respect to regulation, inhibited by aminobisphosphonate drugs (aBP), such as risedronate and alendronate. Functionally, key enzyme in isoprenoid biosynthesis which catalyzes the formation of farnesyl diphosphate (FPP), a sterol precursor. Involved in the inhibition of cell growth. This is Farnesyl diphosphate synthase (fps) from Dictyostelium discoideum (Social amoeba).